We begin with the raw amino-acid sequence, 432 residues long: Adenosylhomocysteinase (432 aa).

Ser-2 bears the N-acetylserine mark. Thr-57, Asp-131, and Glu-156 together coordinate substrate. Residue Ser-183 is modified to Phosphoserine. Positions 183–350 are NAD binding; that stretch reads SVTKSKFDNL…EGRLVNLGCA (168 aa). Positions 186 and 190 each coordinate substrate. Lys-186 carries the post-translational modification N6-(2-hydroxyisobutyryl)lysine. Position 193 is a phosphotyrosine (Tyr-193).

This sequence belongs to the adenosylhomocysteinase family. Homotetramer. Interaction with AHCYL1. The cofactor is NAD(+).

Its subcellular location is the cytoplasm. It localises to the melanosome. The protein localises to the nucleus. The protein resides in the endoplasmic reticulum. The enzyme catalyses S-adenosyl-L-homocysteine + H2O = L-homocysteine + adenosine. The protein operates within amino-acid biosynthesis; L-homocysteine biosynthesis; L-homocysteine from S-adenosyl-L-homocysteine: step 1/1. Catalyzes the hydrolysis of S-adenosyl-L-homocysteine to form adenosine and homocysteine. Binds copper ions. This chain is Adenosylhomocysteinase (AHCY), found in Macaca fascicularis (Crab-eating macaque).